The primary structure comprises 265 residues: 3-methyl-2-oxobutanoate hydroxymethyltransferase (265 aa).

Mg(2+) is bound by residues D45 and D84. 3-methyl-2-oxobutanoate is bound by residues 45 to 46 (DS), D84, and K112. A Mg(2+)-binding site is contributed by E114. Residue E181 is the Proton acceptor of the active site.

The protein belongs to the PanB family. In terms of assembly, homodecamer; pentamer of dimers. Mg(2+) is required as a cofactor.

Its subcellular location is the cytoplasm. The catalysed reaction is 3-methyl-2-oxobutanoate + (6R)-5,10-methylene-5,6,7,8-tetrahydrofolate + H2O = 2-dehydropantoate + (6S)-5,6,7,8-tetrahydrofolate. Its pathway is cofactor biosynthesis; (R)-pantothenate biosynthesis; (R)-pantoate from 3-methyl-2-oxobutanoate: step 1/2. Functionally, catalyzes the reversible reaction in which hydroxymethyl group from 5,10-methylenetetrahydrofolate is transferred onto alpha-ketoisovalerate to form ketopantoate. The protein is 3-methyl-2-oxobutanoate hydroxymethyltransferase of Wigglesworthia glossinidia brevipalpis.